The chain runs to 969 residues: Isoleucine--tRNA ligase (969 aa).

The 'HIGH' region motif lies at 70-80 (PYANGAIHIGH). E601 lines the L-isoleucyl-5'-AMP pocket. Positions 642-646 (KMSKS) match the 'KMSKS' region motif. K645 is a binding site for ATP.

It belongs to the class-I aminoacyl-tRNA synthetase family. IleS type 1 subfamily. As to quaternary structure, monomer.

The protein localises to the cytoplasm. It carries out the reaction tRNA(Ile) + L-isoleucine + ATP = L-isoleucyl-tRNA(Ile) + AMP + diphosphate. Functionally, catalyzes the attachment of isoleucine to tRNA(Ile). As IleRS can inadvertently accommodate and process structurally similar amino acids such as valine, to avoid such errors it has two additional distinct tRNA(Ile)-dependent editing activities. One activity is designated as 'pretransfer' editing and involves the hydrolysis of activated Val-AMP. The other activity is designated 'posttransfer' editing and involves deacylation of mischarged Val-tRNA(Ile). The polypeptide is Isoleucine--tRNA ligase (Caulobacter vibrioides (strain ATCC 19089 / CIP 103742 / CB 15) (Caulobacter crescentus)).